The sequence spans 102 residues: MVAKGSDFETEIKEEIIVAEPRRFKVILLNDDYSTMDFVVEVLMVIFNKNFDEALGVMLKVHNEGRGVCGIYPYDVAETKVSQVKKKAEESGFPLRAILEEC.

Belongs to the ClpS family. In terms of assembly, binds to the N-terminal domain of the chaperone ClpA.

Its function is as follows. Involved in the modulation of the specificity of the ClpAP-mediated ATP-dependent protein degradation. This is ATP-dependent Clp protease adapter protein ClpS from Wolinella succinogenes (strain ATCC 29543 / DSM 1740 / CCUG 13145 / JCM 31913 / LMG 7466 / NCTC 11488 / FDC 602W) (Vibrio succinogenes).